Here is a 170-residue protein sequence, read N- to C-terminus: Putative 3-methyladenine DNA glycosylase (170 aa).

Belongs to the DNA glycosylase MPG family.

This chain is Putative 3-methyladenine DNA glycosylase, found in Sodalis glossinidius.